Consider the following 144-residue polypeptide: UPF0547 protein C16orf87 homolog (144 aa).

The disordered stretch occupies residues 33–112 (HAKQSQRLPP…EEKEKQEKEV (80 aa)). Polar residues predominate over residues 35-45 (KQSQRLPPTSE). The span at 50-62 (PKRRRTERIKRER) shows a compositional bias: basic residues. Composition is skewed to basic and acidic residues over residues 63–74 (IHTAVNRDLENR) and 99–112 (KKHE…EKEV). A coiled-coil region spans residues 94-122 (KTATTKKHEEEKEKQEKEVDMYANLSDEK).

It belongs to the UPF0547 family.

The sequence is that of UPF0547 protein C16orf87 homolog from Xenopus laevis (African clawed frog).